Reading from the N-terminus, the 633-residue chain is Bifunctional enzyme CysN/CysC (633 aa).

The interval 1 to 463 (MSHQSDLISE…REERAGRFGQ (463 aa)) is sulfate adenylyltransferase. The tr-type G domain occupies 22 to 241 (KELLRFLTCG…TVEIAADRNL (220 aa)). The tract at residues 31–38 (GNVDDGKS) is G1. Residue 31-38 (GNVDDGKS) participates in GTP binding. A G2 region spans residues 89–93 (GITID). The interval 110-113 (DTPG) is G3. GTP-binding positions include 110–114 (DTPGH) and 165–168 (NKMD). The segment at 165 to 168 (NKMD) is G4. Residues 204-206 (SAL) form a G5 region. The tract at residues 464 to 633 (QPATVLFSGL…LDLLRERQAI (170 aa)) is adenylyl-sulfate kinase. ATP is bound at residue 472–479 (GLSGAGKS).

It in the C-terminal section; belongs to the APS kinase family. In the N-terminal section; belongs to the TRAFAC class translation factor GTPase superfamily. Classic translation factor GTPase family. CysN/NodQ subfamily. As to quaternary structure, heterodimer composed of CysD, the smaller subunit, and CysNC.

It catalyses the reaction sulfate + ATP + H(+) = adenosine 5'-phosphosulfate + diphosphate. The enzyme catalyses adenosine 5'-phosphosulfate + ATP = 3'-phosphoadenylyl sulfate + ADP + H(+). The protein operates within sulfur metabolism; hydrogen sulfide biosynthesis; sulfite from sulfate: step 1/3. It functions in the pathway sulfur metabolism; hydrogen sulfide biosynthesis; sulfite from sulfate: step 2/3. In terms of biological role, with CysD forms the ATP sulfurylase (ATPS) that catalyzes the adenylation of sulfate producing adenosine 5'-phosphosulfate (APS) and diphosphate, the first enzymatic step in sulfur assimilation pathway. APS synthesis involves the formation of a high-energy phosphoric-sulfuric acid anhydride bond driven by GTP hydrolysis by CysN coupled to ATP hydrolysis by CysD. APS kinase catalyzes the synthesis of activated sulfate. The polypeptide is Bifunctional enzyme CysN/CysC (cysNC) (Pseudomonas aeruginosa (strain ATCC 15692 / DSM 22644 / CIP 104116 / JCM 14847 / LMG 12228 / 1C / PRS 101 / PAO1)).